The following is a 217-amino-acid chain: 3-isopropylmalate dehydratase small subunit (217 aa).

This sequence belongs to the LeuD family. LeuD type 1 subfamily. Heterodimer of LeuC and LeuD.

It carries out the reaction (2R,3S)-3-isopropylmalate = (2S)-2-isopropylmalate. The protein operates within amino-acid biosynthesis; L-leucine biosynthesis; L-leucine from 3-methyl-2-oxobutanoate: step 2/4. In terms of biological role, catalyzes the isomerization between 2-isopropylmalate and 3-isopropylmalate, via the formation of 2-isopropylmaleate. This is 3-isopropylmalate dehydratase small subunit from Delftia acidovorans (strain DSM 14801 / SPH-1).